A 194-amino-acid polypeptide reads, in one-letter code: dTTP/UTP pyrophosphatase (194 aa).

Aspartate 73 serves as the catalytic Proton acceptor.

Belongs to the Maf family. YhdE subfamily. Requires a divalent metal cation as cofactor.

It localises to the cytoplasm. The enzyme catalyses dTTP + H2O = dTMP + diphosphate + H(+). It catalyses the reaction UTP + H2O = UMP + diphosphate + H(+). In terms of biological role, nucleoside triphosphate pyrophosphatase that hydrolyzes dTTP and UTP. May have a dual role in cell division arrest and in preventing the incorporation of modified nucleotides into cellular nucleic acids. In Geotalea uraniireducens (strain Rf4) (Geobacter uraniireducens), this protein is dTTP/UTP pyrophosphatase.